We begin with the raw amino-acid sequence, 426 residues long: Serine--tRNA ligase (426 aa).

233 to 235 (TAE) serves as a coordination point for L-serine. ATP is bound at residue 264 to 266 (RSE). Glutamate 287 serves as a coordination point for L-serine. ATP is bound at residue 351-354 (EISS). Serine 387 is a binding site for L-serine.

The protein belongs to the class-II aminoacyl-tRNA synthetase family. Type-1 seryl-tRNA synthetase subfamily. In terms of assembly, homodimer. The tRNA molecule binds across the dimer.

It is found in the cytoplasm. The enzyme catalyses tRNA(Ser) + L-serine + ATP = L-seryl-tRNA(Ser) + AMP + diphosphate + H(+). It catalyses the reaction tRNA(Sec) + L-serine + ATP = L-seryl-tRNA(Sec) + AMP + diphosphate + H(+). Its pathway is aminoacyl-tRNA biosynthesis; selenocysteinyl-tRNA(Sec) biosynthesis; L-seryl-tRNA(Sec) from L-serine and tRNA(Sec): step 1/1. Catalyzes the attachment of serine to tRNA(Ser). Is also able to aminoacylate tRNA(Sec) with serine, to form the misacylated tRNA L-seryl-tRNA(Sec), which will be further converted into selenocysteinyl-tRNA(Sec). The chain is Serine--tRNA ligase from Pseudomonas paraeruginosa (strain DSM 24068 / PA7) (Pseudomonas aeruginosa (strain PA7)).